A 236-amino-acid polypeptide reads, in one-letter code: uncharacterized protein (236 aa).

The disordered stretch occupies residues Gly-217–His-236. Residues Gly-226 to His-236 are compositionally biased toward gly residues.

This is an uncharacterized protein from Ostreid herpesvirus 1 (isolate France) (OsHV-1).